Reading from the N-terminus, the 198-residue chain is MSSRGHSTLPRTLMAPRMISEGDLGGIAQITSSLFLGRGSVASNRHLLQARGITCIVNATIEIPNFNWPQFEYVKVPLADMPHAPIGLYFDTVADKIHSVSRKHGATLVHCAAGVSRSATLCIAYLMKFHNVCLLEAYNWVKARRPVIRPNVGFWRQLIDYERQLFGKSTVKMVQTPYGIVPDVYEKESRHLLPYWGI.

Positions 26–167 (GIAQITSSLF…LIDYERQLFG (142 aa)) constitute a Tyrosine-protein phosphatase domain. Cys-111 functions as the Phosphocysteine intermediate in the catalytic mechanism.

It belongs to the protein-tyrosine phosphatase family. Non-receptor class dual specificity subfamily. As to quaternary structure, interacts with CD28.

The catalysed reaction is O-phospho-L-tyrosyl-[protein] + H2O = L-tyrosyl-[protein] + phosphate. It carries out the reaction O-phospho-L-seryl-[protein] + H2O = L-seryl-[protein] + phosphate. It catalyses the reaction O-phospho-L-threonyl-[protein] + H2O = L-threonyl-[protein] + phosphate. Functionally, involved in the inactivation of MAP kinases. Dephosphorylates ERK, JNK and p38 MAP-kinases. Plays a negative role in TCR signaling by dephosphorylating MAP3K7 adapter TAB1 leading to its inactivation. The polypeptide is Dual specificity protein phosphatase 14 (DUSP14) (Bos taurus (Bovine)).